The chain runs to 756 residues: Cartilage oligomeric matrix protein (756 aa).

Positions 1-20 (MVLAAARVLLLTLAALGASG) are cleaved as a signal peptide. Residues 22-85 (GQMPLGGDLG…PARTPKLTVR (64 aa)) form a COMP N-terminal region. Residues 86-125 (PLSQCSPGFCFPGVACTETANGARCGPCPEGFTGNGSHCA) form the EGF-like 1 domain. Cystine bridges form between Cys90–Cys101, Cys95–Cys110, Cys113–Cys124, Cys130–Cys141, Cys135–Cys150, Cys183–Cys196, Cys190–Cys205, Cys228–Cys242, Cys236–Cys252, and Cys254–Cys265. The N-linked (GlcNAc...) asparagine glycan is linked to Asn120. Residues 126–178 (DVNECTAHPCFPRVRCINTSPGFRCEACPPGFSGPTHEGVGLAFAKANKQVCT) enclose the EGF-like 2; calcium-binding domain. Residues 179–218 (DINECETGQHNCVPNSVCVNTVGSFQCGPCQPGFVGDQAS) form the EGF-like 3; calcium-binding domain. The EGF-like 4 domain maps to 224–266 (PQRFCPDGTPSPCHEKADCVLERDGSRSCVCAVGWAGNGLICG). TSP type-3 repeat units lie at residues 267–299 (RDTD…NSGQ), 300–335 (EDVD…NPDQ), 336–358 (RNTD…NDDQ), 359–394 (KDTD…NSDQ), 395–417 (KDTD…NADQ), 418–455 (RDVD…NSAQ), 456–491 (QDSD…NPGQ), and 492–527 (EDMD…EVTL). Residues 322–502 (NEKDNCPLVR…DMDRDGVGDA (181 aa)) are disordered. Basic and acidic residues-rich tracts occupy residues 333–345 (PDQR…KWGD), 351–369 (RSQK…RGDA), and 415–425 (ADQRDVDHDFV). The short motif at 366–368 (RGD) is the Cell attachment site element. A compositionally biased stretch (acidic residues) spans 466 to 475 (ACDDDDDNDG). The interval 526 to 756 (TLTDFRAFQT…DYEAQRLLQA (231 aa)) is mediates cell survival and induction of the IAP family of survival proteins. The TSP C-terminal domain occupies 531–745 (RAFQTVVLDP…LRYRCNDTIP (215 aa)). N-linked (GlcNAc...) asparagine glycosylation is present at Asn741.

This sequence belongs to the thrombospondin family. As to quaternary structure, pentamer; disulfide-linked. Exists in a more compact conformation in the presence of calcium and shows a more extended conformation in the absence of calcium. Interacts with ITGB3, ITGA5 and FN1. Binding to FN1 requires the presence of divalent cations (Ca(2+), Mg(2+) or Mn(2+)). The greatest amount of binding is seen in the presence of Mn(2+). Interacts with MATN1, MATN3, MATN4 and ACAN. Binds heparin, heparan sulfate and chondroitin sulfate. EDTA dimishes significantly its binding to ACAN and abolishes its binding to MATN3, MATN4 and chondroitin sulfate. Interacts with collagen I, II and IX, and interaction with these collagens is dependent on the presence of zinc ions. Interacts with ADAMTS12. Interacts with ITGA7. Ca(2+) is required as a cofactor. Proteolytically cleaved by metalloproteases ADAMTS4 and ADAMTS1 with ADAMTS4 showing more potent activity.

It is found in the secreted. Its subcellular location is the extracellular space. The protein resides in the extracellular matrix. Functionally, plays a role in the structural integrity of cartilage via its interaction with other extracellular matrix proteins such as the collagens and fibronectin. Can mediate the interaction of chondrocytes with the cartilage extracellular matrix through interaction with cell surface integrin receptors. Could play a role in the pathogenesis of osteoarthritis. Potent suppressor of apoptosis in both primary chondrocytes and transformed cells. Suppresses apoptosis by blocking the activation of caspase-3 and by inducing the IAP family of survival proteins (BIRC3, BIRC2, BIRC5 and XIAP). Essential for maintaining a vascular smooth muscle cells (VSMCs) contractile/differentiated phenotype under physiological and pathological stimuli. Maintains this phenotype of VSMCs by interacting with ITGA7. This is Cartilage oligomeric matrix protein (COMP) from Bos taurus (Bovine).